The primary structure comprises 419 residues: Dimethylallyltryptophan synthase 1 (419 aa).

L-tryptophan is bound by residues F81, M82, and E90. F81 provides a ligand contact to L-tyrosine. 6 residues coordinate (2E)-geranyl diphosphate: R105, K187, Y189, R251, K253, and Y255. The dimethylallyl diphosphate site is built by R105, K187, Y189, R251, K253, and Y255. R257 is an L-tryptophan binding site. R257 is an L-tyrosine binding site. 2 residues coordinate (2E)-geranyl diphosphate: K332 and Y334. K332 and Y334 together coordinate dimethylallyl diphosphate. Y389 contacts L-tryptophan. Y389 contributes to the L-tyrosine binding site. Y404 lines the (2E)-geranyl diphosphate pocket.

This sequence belongs to the tryptophan dimethylallyltransferase family.

The catalysed reaction is L-tyrosine + dimethylallyl diphosphate = 4-O-dimethylallyl-L-tyrosine + diphosphate. Its function is as follows. Dimethylallyltryptophan synthase; part of the DMATS1 gene cluster that mediates the biosynthesis of a reversely N-prenylated monomeric L-tryptophan (r-N-DMAT). DMATS1 catalyzes the reverse N-prenylation of L-Trp with DMAPP to yield N-dimethylallyl-L-tryptophan. DMATS1 exhibits unusually broad substrate specificity and can utilize geranyl diphosphate (GPP) or L-Tyr as an alternative prenyl donor or acceptor, respectively. Is able to catalyze both forward and reverse prenylation, i.e., at C1 or C3 of DMAPP; and it can catalyze C-N and C-O bond-forming reactions. The main product of the cluster is the reverse-N-dimethylallyl-L-tryptophan (r-N-DMAT) produced by the dimethylallyltryptophan synthase DMATS1 and it remains unclear whether this metabolite undergoes further modifications when silent gene clusters are activated. The acetylated form of r-N-DMAT, ac-r-N-DMAT, is also produced. The roles of the cytochrome P450 monooxygenase FFUJ_09176 and the methyltransferase FFUJ_09178 have still to be elucidated. The sequence is that of Dimethylallyltryptophan synthase 1 from Gibberella fujikuroi (strain CBS 195.34 / IMI 58289 / NRRL A-6831) (Bakanae and foot rot disease fungus).